The following is a 1197-amino-acid chain: Pleckstrin homology domain-containing family A member 7 (1197 aa).

WW domains lie at 8-41 and 53-86; these read DTLPDNGSYGVCRDGRVFFIDDEARATTWLHPRT and SDLPSGWEEGFTKEGASFFIDHNQRTTTFIHPVT. The segment at 98-148 is disordered; that stretch reads LQDQPGGRMLKQPSSTISEASTTVTTSTVDSTSGSKGSRSSGRVHSFGKRD. Positions 111 to 140 are enriched in low complexity; it reads SSTISEASTTVTTSTVDSTSGSKGSRSSGR. The region spanning 158–257 is the PH domain; sequence PVVVRGWLYK…WVRAMNQAAL (100 aa). 3 disordered regions span residues 348–384, 423–467, and 508–577; these read PGSTPPSRVASRAPSRAVSTPPVVQRNGTPIEQNGMP, LVST…QLPS, and FRHG…TVRP. Residues 528 to 546 are compositionally biased toward low complexity; it reads VSSTRNNSDVSRSVSVPPT. Residues 568–577 show a composition bias toward basic and acidic residues; the sequence is TPAERVTVRP. Residues 678–799 adopt a coiled-coil conformation; it reads DKILQELEFR…RIEDVMTGLS (122 aa). 2 disordered regions span residues 830-928 and 1032-1064; these read SRCM…SYSN and HQRALVRERKRNLSQGERHHSRASTRPVNSDPG. Over residues 913-924 the composition is skewed to basic and acidic residues; the sequence is RQSDERKRDRES. Residues 1016–1044 are a coiled coil; sequence QRVRMSVEEQLERMKRHQRALVRERKRNL. Basic residues predominate over residues 1032-1043; that stretch reads HQRALVRERKRN.

It localises to the cell junction. The protein resides in the adherens junction. It is found in the cytoplasm. The protein localises to the cytoskeleton. Its subcellular location is the microtubule organizing center. It localises to the centrosome. Its function is as follows. Required for zonula adherens biogenesis and maintenance. This Danio rerio (Zebrafish) protein is Pleckstrin homology domain-containing family A member 7 (plekha7).